We begin with the raw amino-acid sequence, 461 residues long: Nucleobindin-1 (461 aa).

Positions 1–26 (MPPSGPRGTLLLLPLLLLLLLRAVLA) are cleaved as a signal peptide. Positions 42–51 (TESPDTGLYY) are O-glycosylated at one site. Residue S86 is modified to Phosphoserine; by FAM20C. Position 148 is a phosphothreonine; by FAM20C (T148). The stretch at 150 to 218 (EARDLELLIQ…QQRRHREHPK (69 aa)) forms a coiled coil. The DNA-binding element occupies 172–218 (HHEEFKRYEMLKEHERRRYLESLGEEQRKEAERKLEEQQRRHREHPK). Basic and acidic residues predominate over residues 193-210 (SLGEEQRKEAERKLEEQQ). The tract at residues 193–221 (SLGEEQRKEAERKLEEQQRRHREHPKVNV) is disordered. A binds to GNAI2 and GNAI3 region spans residues 228 to 321 (LKEVWEELDG…VTLEEFLAST (94 aa)). 2 consecutive EF-hand domains span residues 240 to 275 (PNRF…ELEK) and 292 to 327 (ERLR…KEFG). Ca(2+) contacts are provided by D253, N255, D257, E264, D305, N307, D309, and E316. Residues 303–333 (NVDTNQDRLVTLEEFLASTQRKEFGDTGEGW) carry the GBA motif. Residues 341–407 (AYTEEELRRF…QRKQQQQQQQ (67 aa)) are a coiled coil. The disordered stretch occupies residues 368 to 461 (LSQETEALGR…LPEVEVPQHL (94 aa)). S369 is modified (phosphoserine; by FAM20C). Basic and acidic residues predominate over residues 437–461 (DQKEVDTSEKKLLERLPEVEVPQHL).

Belongs to the nucleobindin family. As to quaternary structure, interacts (via GBA motif) with guanine nucleotide-binding protein G(i) alpha subunits GNAI1, GNAI2 and GNAI3 with higher affinity for GNAI1 and GNAI3 than for GNAI2. Preferentially interacts with inactive rather than active GNAI3. Interaction with GNAI3 is inhibited when NUCB1 binds calcium, probably due to a conformational change which renders the GBA motif inaccessible. O-glycosylated. In terms of tissue distribution, expressed both in fetal and adult heart, lung, liver, kidney and brain, and in adult skeletal muscle, placenta and pancreas.

The protein resides in the golgi apparatus. It localises to the cis-Golgi network membrane. Its subcellular location is the cytoplasm. The protein localises to the secreted. Its function is as follows. Major calcium-binding protein of the Golgi which may have a role in calcium homeostasis. Acts as a non-receptor guanine nucleotide exchange factor which binds to and activates alpha subunits of guanine nucleotide-binding proteins (G proteins). This Homo sapiens (Human) protein is Nucleobindin-1 (NUCB1).